The following is a 385-amino-acid chain: Calcium/calmodulin-dependent protein kinase type 1D (385 aa).

The Protein kinase domain occupies 23–279 (FEFKETLGTG…CEQAARHPWI (257 aa)). ATP-binding positions include 29 to 37 (LGTGAFSEV) and K52. K113 is covalently cross-linked (Glycyl lysine isopeptide (Lys-Gly) (interchain with G-Cter in SUMO2)). S122 bears the Phosphoserine mark. The active-site Proton acceptor is the D144. At T180 the chain carries Phosphothreonine; by CaMKK1 and CaMKK2. The tract at residues 279-319 (IAGDTALNKNIHESVSAQIRKNFAKSKWRQAFNATAVVRHM) is autoinhibitory domain. The interval 299–320 (KNFAKSKWRQAFNATAVVRHMR) is calmodulin-binding. Residues 318–324 (HMRKLHL) carry the Nuclear export signal motif. The disordered stretch occupies residues 360-385 (SSGVSGVGAERRPRPTTVTAVHSGSK). Polar residues predominate over residues 375–385 (TTVTAVHSGSK).

The protein belongs to the protein kinase superfamily. CAMK Ser/Thr protein kinase family. CaMK subfamily. As to expression, widely expressed. Highly and mostly expressed in polymorphonuclear leukocytes (neutrophilic and eosinophilic granulocytes) while little or no expression is observed in monocytes and lymphocytes.

The protein localises to the cytoplasm. It localises to the nucleus. The enzyme catalyses L-seryl-[protein] + ATP = O-phospho-L-seryl-[protein] + ADP + H(+). It catalyses the reaction L-threonyl-[protein] + ATP = O-phospho-L-threonyl-[protein] + ADP + H(+). Its activity is regulated as follows. Activated by Ca(2+)/calmodulin. Binding of calmodulin results in conformational change that relieves intrasteric autoinhibition and allows phosphorylation of Thr-180 within the activation loop by CaMKK1 or CaMKK2. Phosphorylation of Thr-180 results in several fold increase in total activity. Unlike CaMK4, may be unable to exhibit autonomous activity after Ca(2+)/calmodulin activation. Functionally, calcium/calmodulin-dependent protein kinase that operates in the calcium-triggered CaMKK-CaMK1 signaling cascade and, upon calcium influx, activates CREB-dependent gene transcription, regulates calcium-mediated granulocyte function and respiratory burst and promotes basal dendritic growth of hippocampal neurons. In neutrophil cells, required for cytokine-induced proliferative responses and activation of the respiratory burst. Activates the transcription factor CREB1 in hippocampal neuron nuclei. May play a role in apoptosis of erythroleukemia cells. In vitro, phosphorylates transcription factor CREM isoform Beta. This chain is Calcium/calmodulin-dependent protein kinase type 1D (CAMK1D), found in Homo sapiens (Human).